Here is a 389-residue protein sequence, read N- to C-terminus: Oxytocin receptor (389 aa).

Residues 1 to 27 form a disordered region; that stretch reads MEGELAANWSTEAVNSSAAPPGAEGNC. Topologically, residues 1–38 are extracellular; the sequence is MEGELAANWSTEAVNSSAAPPGAEGNCTAGPPRRNEAL. Residues N8, N15, and N26 are each glycosylated (N-linked (GlcNAc...) asparagine). Polar residues predominate over residues 8–18; the sequence is NWSTEAVNSSA. A helical membrane pass occupies residues 39–63; that stretch reads ARVEVAVLCLILFLALSGNACVLLA. At 64–74 the chain is on the cytoplasmic side; sequence LRTTRHKHSRL. The helical transmembrane segment at 75–97 threads the bilayer; sequence FFFMKHLSIADLVVAVFQVLPQL. Topologically, residues 98-113 are extracellular; sequence LWDITFRFYGPDLLCR. A disulfide bridge connects residues C112 and C187. The chain crosses the membrane as a helical span at residues 114 to 135; that stretch reads LVKYLQVVGMFASTYLLLLMSL. The Cytoplasmic segment spans residues 136 to 154; sequence DRCLAICQPLRSLRRRTDR. Residues 155–175 traverse the membrane as a helical segment; it reads LAVLATWLGCLVASAPQVHIF. The Extracellular segment spans residues 176–202; sequence SLREVADGVFDCWAVFIQPWGPKAYIT. Residues 203 to 225 form a helical membrane-spanning segment; sequence WITLAVYIVPVIVLAACYGLISF. The Cytoplasmic portion of the chain corresponds to 226-275; that stretch reads KIWQNLRLKTAAAAAAEAPEGAAAGDGGRMALARVSSVKLISKAKIRTVK. A helical membrane pass occupies residues 276–294; the sequence is MTFIIVLAFIVCWTPFFFV. Over 295-309 the chain is Extracellular; sequence QMWSVWDANAPKEAS. The chain crosses the membrane as a helical span at residues 310–332; it reads AFIIVMLLASLNSCCNPWIYMLF. Over 333 to 389 the chain is Cytoplasmic; sequence TGHLFHELVQRFLCCSASYLKGNRLGETSTSKKSNSSSFVLSHRSSSQRSCSQPSTA. The disordered stretch occupies residues 358 to 389; it reads GETSTSKKSNSSSFVLSHRSSSQRSCSQPSTA. Residues 360 to 389 are compositionally biased toward low complexity; it reads TSTSKKSNSSSFVLSHRSSSQRSCSQPSTA. 2 positions are modified to phosphoserine: S366 and S368.

This sequence belongs to the G-protein coupled receptor 1 family. Vasopressin/oxytocin receptor subfamily.

It localises to the cell membrane. Its function is as follows. Receptor for oxytocin. The activity of this receptor is mediated by G proteins which activate a phosphatidylinositol-calcium second messenger system. The sequence is that of Oxytocin receptor (OXTR) from Macaca mulatta (Rhesus macaque).